Here is a 288-residue protein sequence, read N- to C-terminus: uncharacterized protein (288 aa).

In terms of domain architecture, ATP-grasp spans 107-288; sequence KQIPTLIGPQ…LAIQLLASIA (182 aa). ATP-binding positions include lysine 145 and 178-188; that span reads QQYIATSNSEA. Mg(2+) contacts are provided by aspartate 248, glutamate 261, and asparagine 263. 3 residues coordinate Mn(2+): aspartate 248, glutamate 261, and asparagine 263.

This sequence belongs to the RimK family.

This is an uncharacterized protein from Mycoplasma pneumoniae (strain ATCC 29342 / M129 / Subtype 1) (Mycoplasmoides pneumoniae).